We begin with the raw amino-acid sequence, 112 residues long: S-adenosylmethionine decarboxylase proenzyme (112 aa).

The Schiff-base intermediate with substrate; via pyruvic acid role is filled by serine 62. Serine 62 bears the Pyruvic acid (Ser); by autocatalysis mark. Histidine 67 serves as the catalytic Proton acceptor; for processing activity. Catalysis depends on cysteine 82, which acts as the Proton donor; for catalytic activity.

It belongs to the prokaryotic AdoMetDC family. Type 1 subfamily. In terms of assembly, heterotetramer of two alpha and two beta chains arranged as a dimer of alpha/beta heterodimers. The cofactor is pyruvate. Is synthesized initially as an inactive proenzyme. Formation of the active enzyme involves a self-maturation process in which the active site pyruvoyl group is generated from an internal serine residue via an autocatalytic post-translational modification. Two non-identical subunits are generated from the proenzyme in this reaction, and the pyruvate is formed at the N-terminus of the alpha chain, which is derived from the carboxyl end of the proenzyme. The post-translation cleavage follows an unusual pathway, termed non-hydrolytic serinolysis, in which the side chain hydroxyl group of the serine supplies its oxygen atom to form the C-terminus of the beta chain, while the remainder of the serine residue undergoes an oxidative deamination to produce ammonia and the pyruvoyl group blocking the N-terminus of the alpha chain.

It carries out the reaction S-adenosyl-L-methionine + H(+) = S-adenosyl 3-(methylsulfanyl)propylamine + CO2. It functions in the pathway amine and polyamine biosynthesis; S-adenosylmethioninamine biosynthesis; S-adenosylmethioninamine from S-adenosyl-L-methionine: step 1/1. In terms of biological role, catalyzes the decarboxylation of S-adenosylmethionine to S-adenosylmethioninamine (dcAdoMet), the propylamine donor required for the synthesis of the polyamines spermine and spermidine from the diamine putrescine. The sequence is that of S-adenosylmethionine decarboxylase proenzyme from Archaeoglobus fulgidus (strain ATCC 49558 / DSM 4304 / JCM 9628 / NBRC 100126 / VC-16).